We begin with the raw amino-acid sequence, 237 residues long: Lectin ConGF (237 aa).

2 residues coordinate Mn(2+): Glu-8 and Asp-10. Positions 10, 12, 14, and 19 each coordinate Ca(2+). Position 14 (Asn-14) interacts with a carbohydrate. Positions 19 and 24 each coordinate Mn(2+). 4 residues coordinate a carbohydrate: Leu-99, Tyr-100, Asp-208, and Arg-228.

It belongs to the leguminous lectin family. Homotetramer; dimer of dimers. Concanavalin A-like lectins of the Diocleinae subtribe undergo proteolytic processing referred to as circular permutation. The propeptide is split into an N-terminal and a C-terminal part, the gamma and beta chain, respectively. These are then religated in beta-gamma order to form the mature alpha chain. The beta and gamma chains can often be detected in cell extracts. Residues 1-118 of the mature chain, as displayed here, probably constitute the beta chain in the propeptide, residues 119-237 the gamma chain.

Functionally, lectin. Induces paw edema in mice. Has a weak vasorelaxant effect on rat aorta. Has anti-inflammatory and anti-nociceptive effects. The protein is Lectin ConGF of Canavalia grandiflora (Jackbean).